The primary structure comprises 492 residues: 2,3-bisphosphoglycerate-independent phosphoglycerate mutase (492 aa).

Positions 11 and 61 each coordinate Mn(2+). The Phosphoserine intermediate role is filled by Ser61. Substrate-binding positions include His118, 147–148 (RD), Arg178, Arg184, 248–251 (RNDR), and Lys320. 5 residues coordinate Mn(2+): Asp386, His390, Asp427, His428, and His445.

It belongs to the BPG-independent phosphoglycerate mutase family. Monomer. The cofactor is Mn(2+).

It carries out the reaction (2R)-2-phosphoglycerate = (2R)-3-phosphoglycerate. Its pathway is carbohydrate degradation; glycolysis; pyruvate from D-glyceraldehyde 3-phosphate: step 3/5. In terms of biological role, catalyzes the interconversion of 2-phosphoglycerate and 3-phosphoglycerate. The polypeptide is 2,3-bisphosphoglycerate-independent phosphoglycerate mutase (Campylobacter jejuni subsp. doylei (strain ATCC BAA-1458 / RM4099 / 269.97)).